The sequence spans 340 residues: Glycerol-3-phosphate dehydrogenase [NAD(P)+] (340 aa).

Ser-13, Trp-14, and Lys-108 together coordinate NADPH. Sn-glycerol 3-phosphate is bound by residues Lys-108, Gly-139, and Ser-141. NADPH is bound at residue Ala-143. 5 residues coordinate sn-glycerol 3-phosphate: Lys-194, Asp-247, Ser-257, Arg-258, and Asn-259. The active-site Proton acceptor is Lys-194. Arg-258 provides a ligand contact to NADPH. Positions 282 and 284 each coordinate NADPH.

This sequence belongs to the NAD-dependent glycerol-3-phosphate dehydrogenase family.

It is found in the cytoplasm. It carries out the reaction sn-glycerol 3-phosphate + NAD(+) = dihydroxyacetone phosphate + NADH + H(+). The enzyme catalyses sn-glycerol 3-phosphate + NADP(+) = dihydroxyacetone phosphate + NADPH + H(+). It participates in membrane lipid metabolism; glycerophospholipid metabolism. Catalyzes the reduction of the glycolytic intermediate dihydroxyacetone phosphate (DHAP) to sn-glycerol 3-phosphate (G3P), the key precursor for phospholipid synthesis. The chain is Glycerol-3-phosphate dehydrogenase [NAD(P)+] from Streptococcus thermophilus (strain ATCC BAA-491 / LMD-9).